The following is a 627-amino-acid chain: Pescadillo homolog (627 aa).

The region spanning 321–414 is the BRCT domain; that stretch reads RLRTLFKGLK…QLLPTNKYFI (94 aa). 3 disordered regions span residues 450 to 469, 488 to 562, and 595 to 627; these read HVQS…ETVD, YKKF…LQAR, and TIEA…KLGK. A phosphoserine mark is found at S453 and S457. Acidic residues-rich tracts occupy residues 454-469 and 497-521; these read DDDS…ETVD and VNED…EELD. Residues 507 to 538 adopt a coiled-coil conformation; it reads DDDNEDDDEEEEELDEKTKRLQEEKQKMSVQS. Residues 522–533 are compositionally biased toward basic and acidic residues; it reads EKTKRLQEEKQK. The span at 540-549 shows a compositional bias: basic residues; it reads KVHKVNKRQV. Composition is skewed to basic and acidic residues over residues 550 to 559 and 595 to 615; these read HKAEVDEHRL and TIEA…RKEA. Positions 582 to 625 form a coiled coil; sequence KEKEEWLLRKKRRTIEASEKEARKTAKREARKEAAAAAAKASKL. The segment covering 616–627 has biased composition (low complexity); the sequence is AAAAAKASKLGK.

It belongs to the pescadillo family.

Its subcellular location is the nucleus. The protein localises to the nucleolus. It localises to the nucleoplasm. In terms of biological role, required for maturation of ribosomal RNAs and formation of the large ribosomal subunit. In Drosophila sechellia (Fruit fly), this protein is Pescadillo homolog.